The following is a 142-amino-acid chain: Hemoglobin subunit alpha (142 aa).

The region spanning 2 to 142 (VLSGEDKSNI…VSTVLTSKYR (141 aa)) is the Globin domain. Ser4 carries the post-translational modification Phosphoserine. 2 positions are modified to N6-succinyllysine: Lys8 and Lys12. Position 17 is an N6-acetyllysine; alternate (Lys17). At Lys17 the chain carries N6-succinyllysine; alternate. Tyr25 is modified (phosphotyrosine). Ser36 is subject to Phosphoserine. At Lys41 the chain carries N6-succinyllysine. Ser50 bears the Phosphoserine mark. Position 59 (His59) interacts with O2. His88 lines the heme b pocket. At Ser103 the chain carries Phosphoserine. Phosphothreonine is present on Thr109. Phosphoserine occurs at positions 112, 125, and 132. A phosphothreonine mark is found at Thr135 and Thr138. A Phosphoserine modification is found at Ser139.

Belongs to the globin family. In terms of assembly, heterotetramer of two alpha chains and two beta chains. Red blood cells.

Functionally, involved in oxygen transport from the lung to the various peripheral tissues. Hemopressin acts as an antagonist peptide of the cannabinoid receptor CNR1. Hemopressin-binding efficiently blocks cannabinoid receptor CNR1 and subsequent signaling. The polypeptide is Hemoglobin subunit alpha (Hba) (Mus musculus (Mouse)).